The primary structure comprises 92 residues: Small ribosomal subunit protein uS19c (92 aa).

This sequence belongs to the universal ribosomal protein uS19 family.

The protein resides in the plastid. It localises to the chloroplast. Its function is as follows. Protein S19 forms a complex with S13 that binds strongly to the 16S ribosomal RNA. This Vitis vinifera (Grape) protein is Small ribosomal subunit protein uS19c.